The sequence spans 314 residues: Transcription factor SOX-12 (314 aa).

Disordered regions lie at residues 1-40 (MVQQ…SGHI) and 101-287 (MADY…FEFP). The segment at residues 40–108 (IKRPMNAFMV…KHMADYPDYK (69 aa)) is a DNA-binding region (HMG box). Positions 149 to 159 (RASGGPLGGGA) are enriched in gly residues. Positions 162-173 (PEDDDEDEEEEL) are enriched in acidic residues. Residues 174-187 (LEVRLLETPGRELW) show a composition bias toward basic and acidic residues. The segment covering 191–217 (PAGRAARGPAERAQGPSGEGAAASAAS) has biased composition (low complexity). Residues 221-243 (SEDEEPEEEEEEAATAEEGEEET) are compositionally biased toward acidic residues. Residues 282-314 (SHFEFPDYCTPEVTEMIAGDWRSSSIADLVFTY) form a required for transcriptional activation activity and synergistic coactivation of transcriptional activity with POU3F2 region.

In terms of tissue distribution, expressed in splenic and thymic regulatory T-cells (at protein level). Expressed in embryonic molar and incisor teeth.

The protein resides in the nucleus. Functionally, transcription factor that binds to DNA at the consensus sequence 5'-ACCAAAG-3'. Acts as a transcriptional activator. Binds cooperatively with POU3F2/BRN2 or POU3F1/OCT6 to gene promoters, which enhances transcriptional activation. Involved in the differentiation of naive CD4-positive T-cells into peripherally induced regulatory T (pT reg) cells under inflammatory conditions. Binds to the promoter region of the FOXP3 gene and promotes its transcription, and might thereby contribute to pT reg cell differentiation in the spleen and lymph nodes during inflammation. Plays a redundant role with SOX4 and SOX11 in cell survival of developing tissues such as the neural tube, branchial arches and somites, thereby contributing to organogenesis. This chain is Transcription factor SOX-12 (Sox12), found in Mus musculus (Mouse).